Here is a 156-residue protein sequence, read N- to C-terminus: Arginine repressor (156 aa).

The protein belongs to the ArgR family.

It is found in the cytoplasm. It participates in amino-acid biosynthesis; L-arginine biosynthesis [regulation]. Functionally, regulates arginine biosynthesis genes. The polypeptide is Arginine repressor (Escherichia fergusonii (strain ATCC 35469 / DSM 13698 / CCUG 18766 / IAM 14443 / JCM 21226 / LMG 7866 / NBRC 102419 / NCTC 12128 / CDC 0568-73)).